We begin with the raw amino-acid sequence, 334 residues long: Glycerol-3-phosphate dehydrogenase [NAD(P)+] 2 (334 aa).

The NADPH site is built by Trp-16, Arg-36, Arg-37, and Lys-110. 2 residues coordinate sn-glycerol 3-phosphate: Lys-110 and Gly-140. NADPH is bound at residue Ala-144. 5 residues coordinate sn-glycerol 3-phosphate: Lys-195, Asp-248, Ser-258, Arg-259, and Asn-260. The active-site Proton acceptor is Lys-195. Residue Arg-259 coordinates NADPH. NADPH is bound by residues Val-282 and Glu-284.

This sequence belongs to the NAD-dependent glycerol-3-phosphate dehydrogenase family.

The protein resides in the cytoplasm. It catalyses the reaction sn-glycerol 3-phosphate + NAD(+) = dihydroxyacetone phosphate + NADH + H(+). It carries out the reaction sn-glycerol 3-phosphate + NADP(+) = dihydroxyacetone phosphate + NADPH + H(+). The protein operates within membrane lipid metabolism; glycerophospholipid metabolism. In terms of biological role, catalyzes the reduction of the glycolytic intermediate dihydroxyacetone phosphate (DHAP) to sn-glycerol 3-phosphate (G3P), the key precursor for phospholipid synthesis. The chain is Glycerol-3-phosphate dehydrogenase [NAD(P)+] 2 from Mycobacterium tuberculosis (strain ATCC 25618 / H37Rv).